The primary structure comprises 232 residues: Vesicle transport through interaction with t-SNAREs homolog 1B (232 aa).

Alanine 2 carries the post-translational modification N-acetylalanine. Interaction with CLINT1 regions lie at residues 2-23 and 69-73; these read ATSA…GLHE and APLSF. Topologically, residues 2 to 208 are cytoplasmic; that stretch reads ATSAASSEHF…SRKVTTNKLL (207 aa). Residues 35-98 adopt a coiled-coil conformation; that stretch reads MAGTEEKKKL…AKLHREVRST (64 aa). Threonine 103 bears the Phosphothreonine mark. Arginine 107 is modified (omega-N-methylarginine). Phosphoserine is present on serine 138. Residues 161–198 are a coiled coil; that stretch reads SEIIEELGEQRDQLERTKSRLVNTSENLSKSRKILRSM. Residues 209–229 form a helical; Anchor for type IV membrane protein membrane-spanning segment; that stretch reads LSIVILLELAILGGLVYYKFL. Over 230–232 the chain is Vesicular; that stretch reads RRH.

This sequence belongs to the VTI1 family. In terms of assembly, forms a SNARE complex with STX7, STX8 and VAMP8 which functions in the homotypic fusion of late endosomes. Component of the SNARE complex composed of STX7, STX8, VAMP7 and VIT1B that is required for heterotypic fusion of late endosomes with lysosomes. May interact with STX17. Interacts with CLINT1.

The protein resides in the early endosome membrane. The protein localises to the late endosome membrane. It localises to the lysosome membrane. It is found in the cytoplasmic granule. Its subcellular location is the recycling endosome membrane. V-SNARE that mediates vesicle transport pathways through interactions with t-SNAREs on the target membrane. These interactions are proposed to mediate aspects of the specificity of vesicle trafficking and to promote fusion of the lipid bilayers. May be concerned with increased secretion of cytokines associated with cellular senescence. The chain is Vesicle transport through interaction with t-SNAREs homolog 1B (VTI1B) from Bos taurus (Bovine).